The following is a 225-amino-acid chain: MNLIEFPLLDQTSSNSVISTTPNDLSNWSRLSSLWPLLYGTSCCFIEFASLIGSRFDFDRYGLVPRSSPRQADLILTAGTVTMKMAPSLVRLYEQMPEPKYVIAMGACTITGGMFSTDSYSTVRGVDKLIPVDVYLPGCPPKPEAVIDALTKLRKKISREIVEDQTLSQNKNRFFTTSHKLYVRRSTHTGTYEQELLYQSPSTLDISSETFFKSKSPVPSYKLVN.

[4Fe-4S] cluster-binding residues include Cys43, Cys44, Cys108, and Cys139.

This sequence belongs to the complex I 20 kDa subunit family. NDH is composed of at least 16 different subunits, 5 of which are encoded in the nucleus. It depends on [4Fe-4S] cluster as a cofactor.

It localises to the plastid. It is found in the chloroplast thylakoid membrane. It carries out the reaction a plastoquinone + NADH + (n+1) H(+)(in) = a plastoquinol + NAD(+) + n H(+)(out). The enzyme catalyses a plastoquinone + NADPH + (n+1) H(+)(in) = a plastoquinol + NADP(+) + n H(+)(out). Its function is as follows. NDH shuttles electrons from NAD(P)H:plastoquinone, via FMN and iron-sulfur (Fe-S) centers, to quinones in the photosynthetic chain and possibly in a chloroplast respiratory chain. The immediate electron acceptor for the enzyme in this species is believed to be plastoquinone. Couples the redox reaction to proton translocation, and thus conserves the redox energy in a proton gradient. This is NAD(P)H-quinone oxidoreductase subunit K, chloroplastic from Lolium perenne (Perennial ryegrass).